The following is a 949-amino-acid chain: Glycine dehydrogenase (decarboxylating) (949 aa).

Lys704 is modified (N6-(pyridoxal phosphate)lysine).

Belongs to the GcvP family. The glycine cleavage system is composed of four proteins: P, T, L and H. The cofactor is pyridoxal 5'-phosphate.

The catalysed reaction is N(6)-[(R)-lipoyl]-L-lysyl-[glycine-cleavage complex H protein] + glycine + H(+) = N(6)-[(R)-S(8)-aminomethyldihydrolipoyl]-L-lysyl-[glycine-cleavage complex H protein] + CO2. The glycine cleavage system catalyzes the degradation of glycine. The P protein binds the alpha-amino group of glycine through its pyridoxal phosphate cofactor; CO(2) is released and the remaining methylamine moiety is then transferred to the lipoamide cofactor of the H protein. The polypeptide is Glycine dehydrogenase (decarboxylating) (Bacteroides fragilis (strain ATCC 25285 / DSM 2151 / CCUG 4856 / JCM 11019 / LMG 10263 / NCTC 9343 / Onslow / VPI 2553 / EN-2)).